Here is a 250-residue protein sequence, read N- to C-terminus: Histone H1.3 (250 aa).

Disordered regions lie at residues 17 to 53 and 104 to 250; these read AASGEKKVSTKKAAATPKSKKSTAAPPSHPPTQQMVD and QTKG…ATKK. The segment covering 27–42 has biased composition (low complexity); that stretch reads KKAAATPKSKKSTAAP. One can recognise an H15 domain in the interval 44 to 118; the sequence is SHPPTQQMVD…GASGSFKLSR (75 aa). Residues 120–133 are compositionally biased toward basic and acidic residues; sequence AKKDAKPKASAVEK. Low complexity predominate over residues 138–161; it reads VNASAAAATKRSSSTSTTKKAAGA. Over residues 174-191 the composition is skewed to basic and acidic residues; sequence KNVEKKKADKEKAKDAKK. Over residues 192 to 234 the composition is skewed to low complexity; the sequence is TGTIKAKLTTAKAKSSATKPKTPKPKTTSAKPKKVVSATTPKK. Basic residues predominate over residues 235-250; sequence TAVKKPKAKTASATKK.

The protein belongs to the histone H1/H5 family.

Its subcellular location is the nucleus. It localises to the chromosome. In terms of biological role, histones H1 are necessary for the condensation of nucleosome chains into higher-order structures. The polypeptide is Histone H1.3 (His1.3) (Drosophila virilis (Fruit fly)).